Here is a 298-residue protein sequence, read N- to C-terminus: Sulfate adenylyltransferase subunit 2 (298 aa).

2 stretches are compositionally biased toward basic and acidic residues: residues 272–282 and 289–298; these read RTSERQGRLID and MEKKKQEGYF. Residues 272-298 are disordered; the sequence is RTSERQGRLIDSDSAGSMEKKKQEGYF.

Belongs to the PAPS reductase family. CysD subfamily. In terms of assembly, heterodimer composed of CysD, the smaller subunit, and CysN.

The enzyme catalyses sulfate + ATP + H(+) = adenosine 5'-phosphosulfate + diphosphate. Its pathway is sulfur metabolism; hydrogen sulfide biosynthesis; sulfite from sulfate: step 1/3. With CysN forms the ATP sulfurylase (ATPS) that catalyzes the adenylation of sulfate producing adenosine 5'-phosphosulfate (APS) and diphosphate, the first enzymatic step in sulfur assimilation pathway. APS synthesis involves the formation of a high-energy phosphoric-sulfuric acid anhydride bond driven by GTP hydrolysis by CysN coupled to ATP hydrolysis by CysD. The polypeptide is Sulfate adenylyltransferase subunit 2 (Burkholderia lata (strain ATCC 17760 / DSM 23089 / LMG 22485 / NCIMB 9086 / R18194 / 383)).